A 358-amino-acid polypeptide reads, in one-letter code: Isopentenyl-diphosphate delta-isomerase (358 aa).

12–13 (RK) is a binding site for substrate. FMN-binding positions include 69–71 (AMT), Ser-99, and Asn-128. Gln-158 provides a ligand contact to substrate. Residue Glu-159 coordinates Mg(2+). Residues Lys-190, Thr-220, 267–269 (GIR), and 288–289 (AG) each bind FMN.

It belongs to the IPP isomerase type 2 family. Homooctamer. Dimer of tetramers. The cofactor is FMN. NADPH is required as a cofactor. It depends on Mg(2+) as a cofactor.

The protein localises to the cytoplasm. It catalyses the reaction isopentenyl diphosphate = dimethylallyl diphosphate. Involved in the biosynthesis of isoprenoids. Catalyzes the 1,3-allylic rearrangement of the homoallylic substrate isopentenyl (IPP) to its allylic isomer, dimethylallyl diphosphate (DMAPP). The protein is Isopentenyl-diphosphate delta-isomerase of Listeria innocua serovar 6a (strain ATCC BAA-680 / CLIP 11262).